The chain runs to 542 residues: MATILDDRSVNLELVTIYEISKILGSSLDLSKTLREVLNVLSAHLETKRVLLSLMQDSGELQLVSAIGLSYEEFQSGRYRVGEGITGKIFQTETPIVVRDLAQEPLFLARTSPRQSQDGEVISFVGVPIKAAREMLGVLCVFRDGQSPSRSVDHEVRLLTMVANLIGQTVRLYRSVAAERQQLQEEKRQLSRQLQGKYKLDNVIGISKAMQEVFAQVHQSAPSRSTMLLRGESGTGKEVIARAIHYLSPRKDGPFIKVNCAALSETLLESELFGHEKGAFTGAQGERKGRFELAHGGTLFLDEIGEISPAFQAKLLRVLQEREFERVGGSRSIKVDVRLVTATNRDLEKAVAKGEFRADLYYRINVVSIFIPPLRERREDIPYLVEHFLEKFRVENQRAMVAMSPQAMKVMMNCYWPGNVRELENCVERTATMMRGDLITEVHFSCQQNKCLTKVLHEPGQQQPVVVVPLERISAPYGAIFAEWDGQGQATGAAPPTSERERLIWAMEQCGWVQAKAARALNISPRQMGYALQKFNIEVKKF.

In terms of domain architecture, GAF spans 29–170 (DLSKTLREVL…MVANLIGQTV (142 aa)). Residues 203-432 (VIGISKAMQE…LENCVERTAT (230 aa)) form the Sigma-54 factor interaction domain. ATP-binding positions include 231–238 (GESGTGKE) and 294–303 (AHGGTLFLDE). An inter-domain linker region spans residues 433 to 499 (MMRGDLITEV…ATGAAPPTSE (67 aa)). Positions 446 and 451 each coordinate a divalent metal cation. Residues 500-542 (RERLIWAMEQCGWVQAKAARALNISPRQMGYALQKFNIEVKKF) form a C-terminal DNA-binding domain region. Residues 514-533 (QAKAARALNISPRQMGYALQ) constitute a DNA-binding region (H-T-H motif).

Interacts with sigma-54.

Functionally, required for activation of most nif operons, which are directly involved in nitrogen fixation. The chain is Nif-specific regulatory protein (nifA) from Herbaspirillum seropedicae.